Consider the following 486-residue polypeptide: Cardiolipin synthase A (486 aa).

The next 2 helical transmembrane spans lie at 3-23 (TFYT…IAGV) and 38-58 (MAWL…YLSV). PLD phosphodiesterase domains are found at residues 219-246 (MDLR…VDPR) and 399-426 (EGGL…DMRS). Active-site residues include H224, K226, D231, H404, K406, and D411.

The protein belongs to the phospholipase D family. Cardiolipin synthase subfamily. ClsA sub-subfamily.

The protein localises to the cell inner membrane. It carries out the reaction 2 a 1,2-diacyl-sn-glycero-3-phospho-(1'-sn-glycerol) = a cardiolipin + glycerol. Functionally, catalyzes the reversible phosphatidyl group transfer from one phosphatidylglycerol molecule to another to form cardiolipin (CL) (diphosphatidylglycerol) and glycerol. The polypeptide is Cardiolipin synthase A (Salmonella choleraesuis (strain SC-B67)).